The following is a 92-amino-acid chain: Small ribosomal subunit protein uS19 (92 aa).

Belongs to the universal ribosomal protein uS19 family.

Functionally, protein S19 forms a complex with S13 that binds strongly to the 16S ribosomal RNA. The protein is Small ribosomal subunit protein uS19 of Novosphingobium aromaticivorans (strain ATCC 700278 / DSM 12444 / CCUG 56034 / CIP 105152 / NBRC 16084 / F199).